Reading from the N-terminus, the 226-residue chain is 26S proteasome non-ATPase regulatory subunit 10 (226 aa).

Positions 1–37 (MEGCVSNLMVCNLAYSGKLEELKESILADKSLATRTD) are required for nuclear localization. Residues 1–71 (MEGCVSNLMV…LGVPVNDKDD (71 aa)) are interaction with RB1. ANK repeat units follow at residues 3–36 (GCVSNLMVCNLAYSGKLEELKESILADKSLATRT), 37–69 (DQDSRTALHWACSAGHTEIVEFLLQLGVPVNDK), 70–102 (DDAGWSPLHIAASAGRDEIVKALLGKGAQVNAV), 103–135 (NQNGCTPLHYAASKNRHEIAVMLLEGGANPDAK), 136–168 (DHYEATAMHRAAAKGNLKMIHILLYYKASTNIQ), 169–201 (DTEGNTPLHLACDEERVEEAKLLVSQGASIYIE), and 202–226 (NKEEKTPLQVAKGGLGLILKRMVEG). Residues 39–226 (DSRTALHWAC…GLILKRMVEG (188 aa)) are interaction with RELA. Residues 171 to 226 (EGNTPLHLACDEERVEEAKLLVSQGASIYIENKEEKTPLQVAKGGLGLILKRMVEG) are interaction with RB1.

As to quaternary structure, part of transient complex containing PSMD10, PSMC4, PSMC5 and PAAF1 formed during the assembly of the 26S proteasome. Stays associated throughout the assembly of the PA700/19S RC and is released upon association with the 20S core. Interacts with PSMC4. Interacts with RB1. Interacts with CDK4. Interacts with MDM2. Interacts with RELA. Associates with a CDK4:CCND2 serine/threonine kinase complex. Interacts with ARHGDIA and increases the interaction between ARHGDIA and RHOA, hence promotes ARHGDIA inactivation of RHOA and ROCK. In terms of tissue distribution, tends to be up-regulated in cancer cells with RAS mutations, including lung cancers and adenocarconimas (at protein level).

Its subcellular location is the cytoplasm. It is found in the nucleus. In terms of biological role, acts as a chaperone during the assembly of the 26S proteasome, specifically of the PA700/19S regulatory complex (RC). In the initial step of the base subcomplex assembly is part of an intermediate PSMD10:PSMC4:PSMC5:PAAF1 module which probably assembles with a PSMD5:PSMC2:PSMC1:PSMD2 module. Independently of the proteasome, regulates EGF-induced AKT activation through inhibition of the RHOA/ROCK/PTEN pathway, leading to prolonged AKT activation. Plays an important role in RAS-induced tumorigenesis. Functionally, acts as an proto-oncoprotein by being involved in negative regulation of tumor suppressors RB1 and p53/TP53. Overexpression is leading to phosphorylation of RB1 and proteasomal degradation of RB1. Regulates CDK4-mediated phosphorylation of RB1 by competing with CDKN2A for binding with CDK4. Facilitates binding of MDM2 to p53/TP53 and the mono- and polyubiquitination of p53/TP53 by MDM2 suggesting a function in targeting the TP53:MDM2 complex to the 26S proteasome. Involved in p53-independent apoptosis. Involved in regulation of NF-kappa-B by retaining it in the cytoplasm. Binds to the NF-kappa-B component RELA and accelerates its XPO1/CRM1-mediated nuclear export. The chain is 26S proteasome non-ATPase regulatory subunit 10 (PSMD10) from Homo sapiens (Human).